A 1344-amino-acid chain; its full sequence is Myb-binding protein 1A (1344 aa).

The segment at 1-24 (MAEMKSPTKAEPASPAEAPQGDRR) is disordered. Alanine 2 is modified (N-acetylalanine). The tract at residues 2–580 (AEMKSPTKAE…WDQMMSTLKE (579 aa)) is interaction with MYB. Serine 14 is modified (phosphoserine). N6-acetyllysine occurs at positions 69 and 156. 2 short sequence motifs (nuclear export signal) span residues 238–256 (SEDN…ANSV) and 261–279 (KLPD…ENKF). Disordered stretches follow at residues 696–752 (NEDE…DVDP) and 1150–1344 (PKSE…VQTP). Positions 708 to 730 (TDEKQLKHGEDADSDSEDSKNSE) are enriched in basic and acidic residues. Residues 731–746 (SDVDSEDGEESEEEDR) are compositionally biased toward acidic residues. A compositionally biased stretch (basic and acidic residues) spans 1150–1161 (PKSEKKNVKDIP). A Glycyl lysine isopeptide (Lys-Gly) (interchain with G-Cter in SUMO2) cross-link involves residue lysine 1151. Positions 1154-1344 (KKNVKDIPSD…RVARRRVQTP (191 aa)) are required for nuclear and nucleolar localization. Serine 1162 and serine 1166 each carry phosphoserine. Over residues 1170–1187 (TKRKKKGFLPETKKRKKL) the composition is skewed to basic residues. Position 1189 is a phosphoserine (serine 1189). At threonine 1193 the chain carries Phosphothreonine. Residues serine 1221 and serine 1246 each carry the phosphoserine modification. A compositionally biased stretch (low complexity) spans 1247 to 1256 (PAPNNPTLSP). Threonine 1253 carries the phosphothreonine modification. Serine 1255 carries the phosphoserine modification. 2 positions are modified to phosphothreonine: threonine 1258 and threonine 1280. Phosphoserine is present on residues serine 1283, serine 1305, and serine 1318. The span at 1301 to 1316 (VKRRSSQSALPKKRAR) shows a compositional bias: basic residues. Low complexity predominate over residues 1317 to 1329 (LSLVSRSPSLLQS). Arginine 1322 carries the citrulline modification. Phosphoserine occurs at positions 1323, 1325, and 1329. Residues 1331 to 1344 (IRKRRVARRRVQTP) show a composition bias toward basic residues.

It belongs to the MYBBP1A family. As to quaternary structure, binds to and represses JUN and MYB via the leucine zipper regions present in these proteins. Also binds to and represses PPARGC1A: this interaction is abrogated when PPARGC1A is phosphorylated by MAPK1/ERK. Binds to and stimulates transcription by AHR. Binds to KPNA2. Component of the B-WICH complex, at least composed of SMARCA5/SNF2H, BAZ1B/WSTF, SF3B1, DEK, MYO1C, ERCC6, MYBBP1A and DDX21. Interacts with CLOCK and CRY1. In terms of processing, citrullinated by PADI4.

Its subcellular location is the nucleus. The protein resides in the nucleolus. The protein localises to the cytoplasm. Its function is as follows. May activate or repress transcription via interactions with sequence specific DNA-binding proteins. Repression may be mediated at least in part by histone deacetylase activity (HDAC activity). Acts as a corepressor and in concert with CRY1, represses the transcription of the core circadian clock component PER2. Preferentially binds to dimethylated histone H3 'Lys-9' (H3K9me2) on the PER2 promoter. Has a role in rRNA biogenesis together with PWP1. The polypeptide is Myb-binding protein 1A (Mybbp1a) (Rattus norvegicus (Rat)).